Here is a 72-residue protein sequence, read N- to C-terminus: Translation initiation factor IF-1 (72 aa).

In terms of domain architecture, S1-like spans 1–72; it reads MSKEDMIEFS…TKGRITFRFK (72 aa).

Belongs to the IF-1 family. Component of the 30S ribosomal translation pre-initiation complex which assembles on the 30S ribosome in the order IF-2 and IF-3, IF-1 and N-formylmethionyl-tRNA(fMet); mRNA recruitment can occur at any time during PIC assembly.

It is found in the cytoplasm. In terms of biological role, one of the essential components for the initiation of protein synthesis. Stabilizes the binding of IF-2 and IF-3 on the 30S subunit to which N-formylmethionyl-tRNA(fMet) subsequently binds. Helps modulate mRNA selection, yielding the 30S pre-initiation complex (PIC). Upon addition of the 50S ribosomal subunit IF-1, IF-2 and IF-3 are released leaving the mature 70S translation initiation complex. In Granulibacter bethesdensis (strain ATCC BAA-1260 / CGDNIH1), this protein is Translation initiation factor IF-1.